Consider the following 294-residue polypeptide: 4-hydroxy-tetrahydrodipicolinate synthase (294 aa).

Thr-44 lines the pyruvate pocket. The active-site Proton donor/acceptor is Tyr-132. Lys-160 (schiff-base intermediate with substrate) is an active-site residue. Pyruvate is bound at residue Val-202.

The protein belongs to the DapA family. As to quaternary structure, homotetramer; dimer of dimers.

The protein localises to the cytoplasm. The enzyme catalyses L-aspartate 4-semialdehyde + pyruvate = (2S,4S)-4-hydroxy-2,3,4,5-tetrahydrodipicolinate + H2O + H(+). It functions in the pathway amino-acid biosynthesis; L-lysine biosynthesis via DAP pathway; (S)-tetrahydrodipicolinate from L-aspartate: step 3/4. Catalyzes the condensation of (S)-aspartate-beta-semialdehyde [(S)-ASA] and pyruvate to 4-hydroxy-tetrahydrodipicolinate (HTPA). This Leptospira borgpetersenii serovar Hardjo-bovis (strain JB197) protein is 4-hydroxy-tetrahydrodipicolinate synthase.